Here is a 468-residue protein sequence, read N- to C-terminus: Adenosylhomocysteinase (468 aa).

Substrate contacts are provided by threonine 57, aspartate 132, and glutamate 194. 195–197 serves as a coordination point for NAD(+); it reads TTT. 2 residues coordinate substrate: lysine 224 and aspartate 228. NAD(+) is bound by residues asparagine 229, 258 to 263, glutamate 281, asparagine 316, 337 to 339, and asparagine 382; these read GFGDVG and IGH.

Belongs to the adenosylhomocysteinase family. NAD(+) serves as cofactor.

It is found in the cytoplasm. The enzyme catalyses S-adenosyl-L-homocysteine + H2O = L-homocysteine + adenosine. It participates in amino-acid biosynthesis; L-homocysteine biosynthesis; L-homocysteine from S-adenosyl-L-homocysteine: step 1/1. In terms of biological role, may play a key role in the regulation of the intracellular concentration of adenosylhomocysteine. This chain is Adenosylhomocysteinase, found in Methylobacterium nodulans (strain LMG 21967 / CNCM I-2342 / ORS 2060).